Reading from the N-terminus, the 331-residue chain is Germ cell-specific gene 1-like protein (331 aa).

Topologically, residues 1–8 (MKTSRRGR) are cytoplasmic. The chain crosses the membrane as a helical span at residues 9 to 29 (ALLAVALNLLALLFATTAFLT). Over 30 to 132 (THWCQGTQRV…FIDLAPASEK (103 aa)) the chain is Extracellular. The helical transmembrane segment at 133–153 (GVLWLSVVSEVLYILLLVVGF) threads the bilayer. At 154-173 (SLMCLELFHSSNVIDGLKLN) the chain is on the cytoplasmic side. A helical membrane pass occupies residues 174–194 (AFAAVFTVLSGLLGMVAHMMY). Topologically, residues 195-217 (TQVFQVTVSLGPEDWRPHSWDYG) are extracellular. Residues 218–238 (WSFCLAWGSFTCCMAASVTTL) form a helical membrane-spanning segment. The Cytoplasmic portion of the chain corresponds to 239–331 (NSYTKTVIEF…RQCWVLGHWV (93 aa)).

This sequence belongs to the GSG1 family. Component of the inner core of AMPAR complex. AMPAR complex consists of an inner core made of 4 pore-forming GluA/GRIA proteins (GRIA1, GRIA2, GRIA3 and GRIA4) and 4 major auxiliary subunits arranged in a twofold symmetry. One of the two pairs of distinct binding sites is occupied either by CNIH2, CNIH3 or CACNG2, CACNG3. The other harbors CACNG2, CACNG3, CACNG4, CACNG8 or GSG1L. This inner core of AMPAR complex is complemented by outer core constituents binding directly to the GluA/GRIA proteins at sites distinct from the interaction sites of the inner core constituents. Outer core constituents include at least PRRT1, PRRT2, CKAMP44/SHISA9, FRRS1L and NRN1. The proteins of the inner and outer core serve as a platform for other, more peripherally associated AMPAR constituents. Alone or in combination, these auxiliary subunits control the gating and pharmacology of the AMPAR complex and profoundly impact their biogenesis and protein processing.

It is found in the cell membrane. The protein localises to the synapse. Functionally, as a component of the inner core of AMPAR complex, modifies AMPA receptor (AMPAR) gating. The polypeptide is Germ cell-specific gene 1-like protein (GSG1L) (Homo sapiens (Human)).